The chain runs to 363 residues: Pyrimidine monooxygenase RutA (363 aa).

FMN-binding positions include 49-50, Asn-115, Glu-124, 140-141, and Ser-190; these read IK and RY.

The protein belongs to the NtaA/SnaA/DszA monooxygenase family. RutA subfamily.

The catalysed reaction is uracil + FMNH2 + NADH + O2 = (Z)-3-ureidoacrylate + FMN + NAD(+) + H2O + H(+). The enzyme catalyses thymine + FMNH2 + NADH + O2 = (Z)-2-methylureidoacrylate + FMN + NAD(+) + H2O + H(+). In terms of biological role, catalyzes the pyrimidine ring opening between N-3 and C-4 by an unusual flavin hydroperoxide-catalyzed mechanism, adding oxygen atoms in the process to yield ureidoacrylate peracid, that immediately reacts with FMN forming ureidoacrylate and FMN-N(5)-oxide. The FMN-N(5)-oxide reacts spontaneously with NADH to produce FMN. Requires the flavin reductase RutF to regenerate FMN in vivo. In Enterobacter sp. (strain 638), this protein is Pyrimidine monooxygenase RutA.